The primary structure comprises 197 residues: Large ribosomal subunit protein uL18 (197 aa).

Belongs to the universal ribosomal protein uL18 family. In terms of assembly, part of the 50S ribosomal subunit. Contacts the 5S and 23S rRNAs.

Its function is as follows. This is one of the proteins that bind and probably mediate the attachment of the 5S RNA into the large ribosomal subunit, where it forms part of the central protuberance. In Sulfolobus acidocaldarius (strain ATCC 33909 / DSM 639 / JCM 8929 / NBRC 15157 / NCIMB 11770), this protein is Large ribosomal subunit protein uL18.